The following is a 571-amino-acid chain: Phosphoenolpyruvate-protein phosphotransferase (571 aa).

The Tele-phosphohistidine intermediate role is filled by H189. Phosphoenolpyruvate contacts are provided by R296 and R332. Mg(2+)-binding residues include E431 and D455. Residues 454-455 (ND) and R465 each bind phosphoenolpyruvate. C502 serves as the catalytic Proton donor.

The protein belongs to the PEP-utilizing enzyme family. As to quaternary structure, homodimer. It depends on Mg(2+) as a cofactor.

It is found in the cytoplasm. It catalyses the reaction L-histidyl-[protein] + phosphoenolpyruvate = N(pros)-phospho-L-histidyl-[protein] + pyruvate. In terms of biological role, general (non sugar-specific) component of the phosphoenolpyruvate-dependent sugar phosphotransferase system (sugar PTS). This major carbohydrate active-transport system catalyzes the phosphorylation of incoming sugar substrates concomitantly with their translocation across the cell membrane. Enzyme I transfers the phosphoryl group from phosphoenolpyruvate (PEP) to the phosphoryl carrier protein (HPr). The protein is Phosphoenolpyruvate-protein phosphotransferase (ptsI) of Buchnera aphidicola subsp. Acyrthosiphon pisum (strain APS) (Acyrthosiphon pisum symbiotic bacterium).